The sequence spans 437 residues: GTPase Der (437 aa).

EngA-type G domains lie at 3–168 (PLIA…PETE) and 178–353 (IQLA…QNRS). Residues 9–16 (GRPNVGKS), 56–60 (DTGGY), 120–123 (NKVE), 184–191 (GRPNVGKS), 231–235 (DTAGL), and 296–299 (NKWD) contribute to the GTP site. A KH-like domain is found at 354-437 (RKISTSVLNK…VPISMRFMQK (84 aa)).

Belongs to the TRAFAC class TrmE-Era-EngA-EngB-Septin-like GTPase superfamily. EngA (Der) GTPase family. In terms of assembly, associates with the 50S ribosomal subunit.

Functionally, GTPase that plays an essential role in the late steps of ribosome biogenesis. The chain is GTPase Der from Pelodictyon phaeoclathratiforme (strain DSM 5477 / BU-1).